Consider the following 321-residue polypeptide: Isopenicillin N synthase (321 aa).

The tract at residues 1–42 is disordered; that stretch reads MPVLMPSADVPTIDISPQLFGTDPTPRRTSRGRSTRPARGSG. Isopenicillin N-binding residues include arginine 87, tyrosine 91, and tyrosine 188. N-[(5S)-5-amino-5-carboxypentanoyl]-L-cysteinyl-D-valine is bound by residues arginine 87, tyrosine 91, tyrosine 188, histidine 213, and aspartate 215. The Fe2OG dioxygenase domain maps to 179–287; sequence TLSAVSMIRY…RLSLPFFLHA (109 aa). 3 residues coordinate Fe(2+): histidine 213, aspartate 215, and histidine 269. A 2-oxoglutarate-binding site is contributed by arginine 278. Residue serine 280 participates in isopenicillin N binding. Position 280 (serine 280) interacts with N-[(5S)-5-amino-5-carboxypentanoyl]-L-cysteinyl-D-valine.

The protein belongs to the iron/ascorbate-dependent oxidoreductase family. Fe cation is required as a cofactor. The cofactor is L-ascorbate.

It catalyses the reaction N-[(5S)-5-amino-5-carboxypentanoyl]-L-cysteinyl-D-valine + O2 = isopenicillin N + 2 H2O. The protein operates within antibiotic biosynthesis; penicillin G biosynthesis; penicillin G from L-alpha-aminoadipate and L-cysteine and L-valine: step 2/3. Its function is as follows. Removes, in the presence of oxygen, 4 hydrogen atoms from delta-L-(alpha-aminoadipyl)-L-cysteinyl-D-valine (ACV) to form the azetidinone and thiazolidine rings of isopenicillin. The protein is Isopenicillin N synthase (pcbC) of Streptantibioticus cattleyicolor (Streptomyces cattleya).